A 455-amino-acid chain; its full sequence is ATP-dependent protease ATPase subunit HslU (455 aa).

Residues Val23, 65–70 (GVGKTE), Asp266, Glu333, and Arg405 each bind ATP.

Belongs to the ClpX chaperone family. HslU subfamily. In terms of assembly, a double ring-shaped homohexamer of HslV is capped on each side by a ring-shaped HslU homohexamer. The assembly of the HslU/HslV complex is dependent on binding of ATP.

The protein localises to the cytoplasm. Functionally, ATPase subunit of a proteasome-like degradation complex; this subunit has chaperone activity. The binding of ATP and its subsequent hydrolysis by HslU are essential for unfolding of protein substrates subsequently hydrolyzed by HslV. HslU recognizes the N-terminal part of its protein substrates and unfolds these before they are guided to HslV for hydrolysis. The polypeptide is ATP-dependent protease ATPase subunit HslU (Xanthomonas axonopodis pv. citri (strain 306)).